Reading from the N-terminus, the 826-residue chain is Protein lozenge (826 aa).

Disordered regions lie at residues 1-45 (MHLH…ASQT), 87-171 (PVSV…WSSS), and 214-263 (ASVG…NNNN). Positions 12 to 24 (PPSPSPNPTPTPS) are enriched in pro residues. The span at 106–141 (SHHHHHLHHHYSPYHHAHPYHPPHPHAPHHHHHHHP) shows a compositional bias: basic residues. A compositionally biased stretch (pro residues) spans 142–153 (PYPYPPAGPHPP). The segment covering 156–171 (VTSSSTSPTGNGWSSS) has biased composition (polar residues). The Runt domain maps to 275–403 (LVQKRQQEHP…TVDGPREPRS (129 aa)). Over residues 774 to 798 (QQQQQQQQQQQQVHHPQQQQVESAG) the composition is skewed to low complexity. The tract at residues 774–826 (QQQQQQQQQQQQVHHPQQQQVESAGEVGGSGAGGVESAREEDVGDLSQVWRPY) is disordered.

In terms of tissue distribution, expressed in the pupal eye during programmed cell death.

It is found in the nucleus. Its function is as follows. Involved in prepatterning photoreceptor precursors in the developing eye; in the larval eye disk it defines a subset of cells as an equipotential group that is competent to respond to the sevenless developmental signal and another subset that confer proper photoreceptor identity by positively regulating the homeo box gene Bar. Involved in the aop/pnt dynamic in a Ras-dependent manner to regulate pros expression. Promotes apoptosis in the pupal eye by directly activating aos and klu. Also modulates hid- and rpr-mediated cell death. Regulates amos function in olfactory sensilla development. The polypeptide is Protein lozenge (lz) (Drosophila melanogaster (Fruit fly)).